The following is a 345-amino-acid chain: Serine proteinase inhibitor 2 (345 aa).

This sequence belongs to the serpin family. Poxviruses subfamily.

It localises to the host cytoplasm. Viral serpin that inhibits both cysteine and serine proteinases involved in the regulation of host inflammatory and apoptosis processes. Major anti-apoptotic protein which inhibits both intrinsic and extrinsic pathways and strongly cleaves host CASP1 and CASP8 but is a rather poor inhibitor of host CASP3. Prevents the proteolytic activity of host interleukin-1-beta converting enzyme (ICE) and ICE-like enzymes. Can also block apoptosis through host tumor necrosis factor (TNF) receptor. The inhibition of host ICE is an example of a 'cross-class' interaction, in which a serpin inhibits a non-serine proteinase. Also inhibits granzyme B. This chain is Serine proteinase inhibitor 2 (OPG199), found in Rabbitpox virus (strain Utrecht) (RPV).